The sequence spans 1192 residues: Probable ATP-dependent RNA helicase kurz (1192 aa).

Positions 170–214 (ELQAKRKNPNVISVEEDDEDSSSSDEDDEEAPAQSAPIAIPTPVS) are disordered. The span at 183–200 (VEEDDEDSSSSDEDDEEA) shows a compositional bias: acidic residues. One can recognise a Helicase ATP-binding domain in the interval 270-436 (METINENPIV…TRLFKIPPPL (167 aa)). 283–290 (GETGSGKT) is an ATP binding site. The DEAH box motif lies at 379 to 382 (DEAH). Positions 504–529 (APTKDVAKNGKVSEEEKEETIDDAAS) are disordered. Over residues 505 to 517 (PTKDVAKNGKVSE) the composition is skewed to basic and acidic residues. At Ser529 the chain carries Phosphoserine. Residue Thr530 is modified to Phosphothreonine. Positions 540-746 (DMKRVIRNIR…DLMLQMRCMG (207 aa)) constitute a Helicase C-terminal domain. The segment covering 567 to 583 (DDYKLPGDDTEADMHEQ) has biased composition (basic and acidic residues). The segment at 567-612 (DDYKLPGDDTEADMHEQPDEDDEQEGLEEDNDDELGLEDESGMGSG) is disordered. Residues 584-607 (PDEDDEQEGLEEDNDDELGLEDES) show a composition bias toward acidic residues.

It belongs to the DEAD box helicase family. DEAH subfamily.

The catalysed reaction is ATP + H2O = ADP + phosphate + H(+). The polypeptide is Probable ATP-dependent RNA helicase kurz (kz) (Drosophila melanogaster (Fruit fly)).